Here is a 470-residue protein sequence, read N- to C-terminus: MAEKEAKHHVVLFPLPGQGHIGSMLKLAQLLSTAGFYITFVHTERNYRRFLLTSTSFNVPKFRFRTIPDGFPDNDPRSPLPFIELQESLDTKCKGYYREVLVAVDEEWPPVTCVVADTALPLALEVPEELGIPVMILAPHSAGSILTGYSIPQLIQGGEFPFPEDADMDELLQGVLGLEGIVRRRDMSVRGFKSIDSPFVRFEVKMNQNLSRGRALILNTTESMDSLALRHIRSICPTTYTLGPFHVLLRNIKDQSHSASLSEEDRSCIAWLDTKPNKSVVYVSFGSLAAMSREAFLEFQQGLLDSGYHFLWVIRPDMVEGGLEECELTASERRYFVKWAPQEEVLAHPAVGCFLTHSGWNSTLESIYAGVPMICWPFFADQLINSRFVSEVWKIALDMKDLCGRSYVERMVKEVMSGEKGKELRKSICEMADMVKKSAEEGGSSYTNFKELIGHIKSLSLPACSSTSGF.

Histidine 20 serves as the catalytic Proton acceptor. Residue histidine 20 coordinates an anthocyanidin. Aspartate 117 (charge relay) is an active-site residue. Alanine 340, glutamine 342, histidine 357, tryptophan 360, asparagine 361, serine 362, and glutamate 365 together coordinate UDP-alpha-D-glucose. Alanine 380 contributes to the an anthocyanidin binding site. Aspartate 381 and glutamine 382 together coordinate UDP-alpha-D-glucose.

This sequence belongs to the UDP-glycosyltransferase family. In terms of tissue distribution, expressed in young cromes.

It carries out the reaction myricetin 3-O-alpha-L-rhamnoside + UDP-alpha-D-glucose = myricetin 3-O-[beta-D-glucosyl-(1-&gt;2)-alpha-L-rhamnoside] + UDP + H(+). It participates in flavonoid metabolism. In terms of biological role, glucosyltransferase involved in montbretin A (MbA) biosynthesis. Catalyzes the glucosylation of myricetin 3-O-alpha-L-rhamnoside (MR) to produce myricetin 3-O-[beta-D-glucosyl-(1-&gt;2)-alpha-L-rhamnoside] (MRG), a precursor of MbA. MbA is a potent inhibitor of human pancreatic alpha-amylase and is being developed as drug candidate to treat type-2 diabetes. In vitro, is able to transfer UDP-xylose with 50-fold less efficiency compared with UDP-glucose. In vitro, can use myricetin 3-O-glucoside and quercetin 3-O-glucoside as substrates, although these two flavonoids may not be physiological substrates in vivo. This is Myricetin 3-O-rhamnoside 1,2-glucosyltransferase UGT709G2 from Crocosmia x crocosmiiflora (Montbretia).